The sequence spans 127 residues: Holotricin-2 (127 aa).

Positions 1–15 are cleaved as a signal peptide; the sequence is MMKLVIALCLIGISA. Positions 16–55 are excised as a propeptide; the sequence is AYVVPVYYEIYPEDATFDEADIEPQLSPAELHHGSIRERR. The tract at residues 43–84 is disordered; sequence PAELHHGSIRERRSLQPGAPSFPMPGSQLPTSVSGNVEKQGR. The segment covering 45 to 56 has biased composition (basic and acidic residues); sequence ELHHGSIRERRS. Positions 70 to 84 are enriched in polar residues; that stretch reads QLPTSVSGNVEKQGR.

This sequence belongs to the coleoptericin family. Hemolymph.

It localises to the secreted. Functionally, antibacterial activity against Gram-negative bacteria but not against Gram-positive bacteria. This Holotrichia diomphalia (Korean black chafer) protein is Holotricin-2.